The primary structure comprises 428 residues: Enolase (428 aa).

Glutamine 164 is a (2R)-2-phosphoglycerate binding site. Residue glutamate 208 is the Proton donor of the active site. Mg(2+)-binding residues include aspartate 245, glutamate 286, and aspartate 313. (2R)-2-phosphoglycerate-binding residues include lysine 338, arginine 367, serine 368, and lysine 389. Lysine 338 serves as the catalytic Proton acceptor.

The protein belongs to the enolase family. Requires Mg(2+) as cofactor.

The protein localises to the cytoplasm. It localises to the secreted. It is found in the cell surface. The enzyme catalyses (2R)-2-phosphoglycerate = phosphoenolpyruvate + H2O. It participates in carbohydrate degradation; glycolysis; pyruvate from D-glyceraldehyde 3-phosphate: step 4/5. In terms of biological role, catalyzes the reversible conversion of 2-phosphoglycerate (2-PG) into phosphoenolpyruvate (PEP). It is essential for the degradation of carbohydrates via glycolysis. This is Enolase from Pyrococcus abyssi (strain GE5 / Orsay).